Consider the following 419-residue polypeptide: Endochitinase 2 (419 aa).

The first 18 residues, 1 to 18 (MHHLRALVGVGLAGLAAG), serve as a signal peptide directing secretion. The region spanning 35-343 (AQNVVYWGQN…QQAKSILVNG (309 aa)) is the GH18 domain. Asparagine 153 carries N-linked (GlcNAc...) asparagine glycosylation. Glutamate 173 functions as the Proton donor in the catalytic mechanism. N-linked (GlcNAc...) asparagine glycans are attached at residues asparagine 237 and asparagine 256. Low complexity predominate over residues 350–381 (GPPSSTPATAPAPTATTMPSSTSVSSPAASPT). The interval 350–386 (GPPSSTPATAPAPTATTMPSSTSVSSPAASPTGGTVP) is disordered. Positions 383 to 419 (GTVPQWGQCGGEGYSGPTQCVAPYQCVKQGDWWSSCR) constitute a CBM1 domain.

This sequence belongs to the glycosyl hydrolase 18 family. Chitinase class III subfamily.

Its subcellular location is the secreted. The catalysed reaction is Random endo-hydrolysis of N-acetyl-beta-D-glucosaminide (1-&gt;4)-beta-linkages in chitin and chitodextrins.. Secreted chitinase involved in the degradation of chitin, a component of the cell walls of fungi and exoskeletal elements of some animals (including worms and arthropods). Participates in the infection process and directly acts in the penetration process of the host cuticle. In Metarhizium robertsii (strain ARSEF 23 / ATCC MYA-3075) (Metarhizium anisopliae (strain ARSEF 23)), this protein is Endochitinase 2 (chi2).